Consider the following 175-residue polypeptide: uncharacterized protein (175 aa).

Residues 1–11 (METWRKGSFRN) constitute a mitochondrion transit peptide. Positions 24–92 (RRLRRQSSVL…PRLYRESSSC (69 aa)) are disordered. A compositionally biased stretch (basic and acidic residues) spans 41–63 (GDHEEYSNREVIRELQGRPDGRR).

Its subcellular location is the mitochondrion. This is an uncharacterized protein from Homo sapiens (Human).